Here is a 92-residue protein sequence, read N- to C-terminus: Small ribosomal subunit protein uS19 (92 aa).

This sequence belongs to the universal ribosomal protein uS19 family.

In terms of biological role, protein S19 forms a complex with S13 that binds strongly to the 16S ribosomal RNA. The protein is Small ribosomal subunit protein uS19 of Bradyrhizobium diazoefficiens (strain JCM 10833 / BCRC 13528 / IAM 13628 / NBRC 14792 / USDA 110).